Here is a 1033-residue protein sequence, read N- to C-terminus: Isoleucine--tRNA ligase 2 (1033 aa).

A 'HIGH' region motif is present at residues 47 to 57 (PTANGLPHVGH). Positions 590 to 594 (KMSKS) match the 'KMSKS' region motif. Residue lysine 593 participates in ATP binding.

It belongs to the class-I aminoacyl-tRNA synthetase family. IleS type 2 subfamily. Monomer. Zn(2+) is required as a cofactor.

It localises to the cytoplasm. The enzyme catalyses tRNA(Ile) + L-isoleucine + ATP = L-isoleucyl-tRNA(Ile) + AMP + diphosphate. Catalyzes the attachment of isoleucine to tRNA(Ile). As IleRS can inadvertently accommodate and process structurally similar amino acids such as valine, to avoid such errors it has two additional distinct tRNA(Ile)-dependent editing activities. One activity is designated as 'pretransfer' editing and involves the hydrolysis of activated Val-AMP. The other activity is designated 'posttransfer' editing and involves deacylation of mischarged Val-tRNA(Ile). This Bacillus anthracis protein is Isoleucine--tRNA ligase 2.